Reading from the N-terminus, the 43-residue chain is MRDLKTYLSTAPVLSTIWFGSLAGLLIEINRLFPDALTFPFFN.

Residues 7–27 (YLSTAPVLSTIWFGSLAGLLI) form a helical membrane-spanning segment.

This sequence belongs to the PsaJ family.

It is found in the plastid. Its subcellular location is the chloroplast thylakoid membrane. In terms of biological role, may help in the organization of the PsaE and PsaF subunits. The protein is Photosystem I reaction center subunit IX of Vitis vinifera (Grape).